The chain runs to 202 residues: MDTQALSDLAAHIEGRMPDAVRSWQIHVGELTLLAERDHIVPLLRFLRDDQQCNFETFIDVCGVDYPERSERFEVVYHLLSMRMNHRIRVRIRTDEETAVPSVVSLWPAANWFEREAFDMYGIQFADHPDLRRILTDYGFEGWPLRKDFPLTGHYEVRYDDLEKRVIYEPVKLAQEYRNFDFLSPWEGMTTVIPGDEKAKEG.

It belongs to the complex I 30 kDa subunit family. In terms of assembly, NDH-1 is composed of 14 different subunits. Subunits NuoB, C, D, E, F, and G constitute the peripheral sector of the complex.

It localises to the cell inner membrane. It carries out the reaction a quinone + NADH + 5 H(+)(in) = a quinol + NAD(+) + 4 H(+)(out). Functionally, NDH-1 shuttles electrons from NADH, via FMN and iron-sulfur (Fe-S) centers, to quinones in the respiratory chain. The immediate electron acceptor for the enzyme in this species is believed to be ubiquinone. Couples the redox reaction to proton translocation (for every two electrons transferred, four hydrogen ions are translocated across the cytoplasmic membrane), and thus conserves the redox energy in a proton gradient. The polypeptide is NADH-quinone oxidoreductase subunit C (Hyphomonas neptunium (strain ATCC 15444)).